Here is a 1097-residue protein sequence, read N- to C-terminus: MSWLRSSPLRQSLTRTTSSGNGIRPIDAATDCDPRACYDSFCKHWQQAYDIIQHSSAPAPTHDDVLGVVSHLDYMVTLLLVELHNCNKISLADSNAPPTAPCLEYLLSENLLDKLYEWAATTGRYANAVRLEQLKLYELLVSHSRHQLLCHEPFLRPLLKILASSQGEIFPPDLEKRLVILLNQLCVVLMQNVHLLDLFFFSAQTQVQEQIQNGNVPPPKSGTTTNFIIFSLLIPYVHREGSIGHQARDALLLCMALSQKNSNIGTYIAQYSSICPLLVTGLGGLYSRLPNSIEINSIDWHRITPDDVTEIPELNLFMNALEFCNAVVQVAHEMIKQQLLDFMYQGFIVPVLGPAILQTNIDSQISAMSYLDLILRSITEPGLLRAFVKFLLDTEKFDGERILDALVERLNSPDGNLCMVTMALFDTLLGLHCEDLMLELMLKYMLPGKHVPISHRHKINKIDPYLNSTEFFLELTPDVMKRARDLARPKSVNEHQQESALPNELSLPSLPSPVMSKTIGANWNYYGLHTGDSLYANLQAYLFEAHWRIAQCQRDCLKWANSYRYQKWPRQGQPQNRLHNHALELAKQFFIEFGGEGIGGLGGGAAIASEAGEKQLDSLQSIGESSGYESFKWRPADEDVSASSGNGTGSVVVGDHPGHDVTISESDVDGHNISSSLSNSSGRRESWRISHNTRNELLLTDLDFSEDLFAQGTVSLGPFLNAIWGKLQTFTSNSLYVNLHLTGLITRLAWYPLPLIHSLLLRSDIVITSDTPSFHQVLRILKQQIDAELPVTEDSLEIIDVARSSLIDREFRLVNARKGNENSPLHQQQSLQHPHHLQPLPAPQQTGAGAQQRSAYATLSAATPVQATPFSAYDPFKRSNNSRRSISKSITSMFSRKSTLPAPAIAPTPASSGLSQIYAFFTGAASTIMGNNNQQSSNQTHLNSSSSSAVTTCETSLSTQPHATGPGSAQLRTTSSTISTSSGTTAGSGGGGGSGSNSSFSIGGSTQTLSAHSNNTTNSSSTLHGGLDGIGPPTGSFNSEPVSLDSVGSSMGIIANTSGTERSRDLALCAVLLDEWLKELAAIAQEQSIVLVTDQWL.

A compositionally biased stretch (polar residues) spans 1–21 (MSWLRSSPLRQSLTRTTSSGN). The interval 1 to 25 (MSWLRSSPLRQSLTRTTSSGNGIRP) is disordered. At Ser491 the chain carries Phosphoserine. Disordered regions lie at residues 639-684 (DVSA…SGRR), 820-856 (NENSPLHQQQSLQHPHHLQPLPAPQQTGAGAQQRSAY), and 932-1042 (NNQQ…SEPV). Residues 641 to 654 (SASSGNGTGSVVVG) are compositionally biased toward low complexity. Ser823 carries the post-translational modification Phosphoserine. Composition is skewed to low complexity over residues 824 to 852 (PLHQQQSLQHPHHLQPLPAPQQTGAGAQQ) and 932 to 948 (NNQQSSNQTHLNSSSSS). Polar residues predominate over residues 949 to 962 (AVTTCETSLSTQPH). Residues 973–985 (TTSSTISTSSGTT) show a composition bias toward low complexity. Positions 986 to 995 (AGSGGGGGSG) are enriched in gly residues. Low complexity-rich tracts occupy residues 996-1006 (SNSSFSIGGST) and 1013-1022 (SNNTTNSSST).

Belongs to the FHIP family.

This is FHIP family protein GK23746 from Drosophila willistoni (Fruit fly).